Reading from the N-terminus, the 322-residue chain is Digestive cysteine proteinase 1 (322 aa).

The signal sequence occupies residues 1-16 (MKVVALFLFGLALAAA). Positions 17 to 105 (NPSWEEFKGK…VFTSTDAAPE (89 aa)) are cleaved as a propeptide — activation peptide. 3 disulfides stabilise this stretch: Cys126–Cys170, Cys160–Cys203, and Cys262–Cys311. The active site involves Cys129. Residues His269 and Asn289 contribute to the active site.

It belongs to the peptidase C1 family.

Inhibited by E-64, antipain, leupeptin, heavy metal ions, iodoacetic acid, dithionitrobenzene, p-hydroxymercuri-benzoate; activated by mercaptoethanol and dithiothreitol. This Homarus americanus (American lobster) protein is Digestive cysteine proteinase 1 (LCP1).